A 138-amino-acid polypeptide reads, in one-letter code: Ribosome-binding factor A (138 aa).

A compositionally biased stretch (low complexity) spans 1–20; that stretch reads MSSRPPSSSGPAGIPKGAPS. Positions 1-21 are disordered; sequence MSSRPPSSSGPAGIPKGAPSQ.

It belongs to the RbfA family. Monomer. Binds 30S ribosomal subunits, but not 50S ribosomal subunits or 70S ribosomes.

The protein resides in the cytoplasm. Functionally, one of several proteins that assist in the late maturation steps of the functional core of the 30S ribosomal subunit. Associates with free 30S ribosomal subunits (but not with 30S subunits that are part of 70S ribosomes or polysomes). Required for efficient processing of 16S rRNA. May interact with the 5'-terminal helix region of 16S rRNA. The sequence is that of Ribosome-binding factor A from Granulibacter bethesdensis (strain ATCC BAA-1260 / CGDNIH1).